A 517-amino-acid chain; its full sequence is UDP-N-acetylmuramoylalanine--D-glutamate ligase (517 aa).

Residue 143 to 149 (GTNGKTT) participates in ATP binding.

This sequence belongs to the MurCDEF family.

The protein resides in the cytoplasm. It carries out the reaction UDP-N-acetyl-alpha-D-muramoyl-L-alanine + D-glutamate + ATP = UDP-N-acetyl-alpha-D-muramoyl-L-alanyl-D-glutamate + ADP + phosphate + H(+). It functions in the pathway cell wall biogenesis; peptidoglycan biosynthesis. In terms of biological role, cell wall formation. Catalyzes the addition of glutamate to the nucleotide precursor UDP-N-acetylmuramoyl-L-alanine (UMA). The protein is UDP-N-acetylmuramoylalanine--D-glutamate ligase of Leifsonia xyli subsp. xyli (strain CTCB07).